Reading from the N-terminus, the 283-residue chain is GDP-polyphosphate phosphotransferase (283 aa).

The protein belongs to the polyphosphate kinase 2 (PPK2) family. Class I subfamily.

It catalyses the reaction [phosphate](n) + GTP = [phosphate](n+1) + GDP. Functionally, uses inorganic polyphosphate (polyP) as a donor to convert GDP to GTP. The chain is GDP-polyphosphate phosphotransferase from Mycolicibacterium smegmatis (strain ATCC 700084 / mc(2)155) (Mycobacterium smegmatis).